Reading from the N-terminus, the 1311-residue chain is Mitogen-activated protein kinase kinase kinase 19 (1311 aa).

Disordered regions lie at residues 85–119 (PDPL…SPPD), 250–274 (PLSQ…PVEH), 330–363 (SVKE…YLSS), 396–472 (MTPA…NPEM), 486–508 (EGTS…PAQN), 576–607 (HRPH…KQAF), and 734–767 (SKDK…FLSS). The span at 250 to 261 (PLSQSAEFSSSK) shows a compositional bias: polar residues. Composition is skewed to basic and acidic residues over residues 262–274 (NHQE…PVEH), 330–345 (SVKE…RDSG), and 450–464 (LEGH…KIPM). The segment covering 734–748 (SKDKGCKDMGGHTED) has biased composition (basic and acidic residues). Residues 1044-1307 (WTKGEILGRG…ALQLLKHSFL (264 aa)) form the Protein kinase domain. ATP-binding positions include 1050-1058 (LGRGAYGTV) and lysine 1072. Residue aspartate 1169 is the Proton acceptor of the active site.

Belongs to the protein kinase superfamily. STE Ser/Thr protein kinase family. STE20 subfamily.

It catalyses the reaction L-seryl-[protein] + ATP = O-phospho-L-seryl-[protein] + ADP + H(+). The catalysed reaction is L-threonyl-[protein] + ATP = O-phospho-L-threonyl-[protein] + ADP + H(+). This is Mitogen-activated protein kinase kinase kinase 19 (Map3k19) from Mus musculus (Mouse).